We begin with the raw amino-acid sequence, 218 residues long: ATP-dependent dethiobiotin synthetase BioD (218 aa).

Thr-9–Thr-15 provides a ligand contact to ATP. Thr-14 serves as a coordination point for Mg(2+). Lys-35 is an active-site residue. Lys-35 is a binding site for phosphate. Thr-39 is a substrate binding site. Residues Asp-50, Glu-116, and Glu-116–Gly-119 contribute to the ATP site. The Mg(2+) site is built by Asp-50 and Glu-116. Glu-116–Gly-119 serves as a coordination point for phosphate. Gly-151–Asn-154 contacts substrate. ATP is bound by residues Asn-175 and Asn-175–Lys-177.

The protein belongs to the dethiobiotin synthetase family. In terms of assembly, homodimer. The cofactor is Mg(2+).

It localises to the cytoplasm. The enzyme catalyses (7R,8S)-7,8-diammoniononanoate + CO2 + ATP = (4R,5S)-dethiobiotin + ADP + phosphate + 3 H(+). It functions in the pathway cofactor biosynthesis; biotin biosynthesis; biotin from 7,8-diaminononanoate: step 1/2. Its function is as follows. Catalyzes a mechanistically unusual reaction, the ATP-dependent insertion of CO2 between the N7 and N8 nitrogen atoms of 7,8-diaminopelargonic acid (DAPA, also called 7,8-diammoniononanoate) to form a ureido ring. The sequence is that of ATP-dependent dethiobiotin synthetase BioD from Helicobacter pylori (strain ATCC 700392 / 26695) (Campylobacter pylori).